The sequence spans 80 residues: Serine protease inhibitor Kazal-type 6 (80 aa).

The N-terminal stretch at 1–23 (MKTSGVFLLLSLALFCFFSGVFG) is a signal peptide. The residue at position 24 (Gln24) is a Pyrrolidone carboxylic acid. In terms of domain architecture, Kazal-like spans 24-80 (QGAQVDCAEFKDPKVYCTRESNPHCGSDGQTYGNKCAFCKAVMKSGGKINLKHRGKC). 3 disulfide bridges follow: Cys30–Cys62, Cys40–Cys59, and Cys48–Cys80.

Seminal plasma.

The protein resides in the secreted. Functionally, serine protease inhibitor selective for kallikreins. Efficiently inhibits KLK4, KLK5, KLK6, KLK7, KLK12, KLK13 and KLK14. Doesn't inhibit KLK8. Inhibits acrosin, trypsin, and chymotrypsin. The chain is Serine protease inhibitor Kazal-type 6 (SPINK6) from Bos taurus (Bovine).